A 271-amino-acid polypeptide reads, in one-letter code: MATH domain and coiled-coil domain-containing protein At3g27040 (271 aa).

Residues 7–133 enclose the MATH domain; it reads DKKFTWVIKN…NGEVKIVAEV (127 aa). Positions 230–271 form a coiled coil; the sequence is KLDWLEKKLKETGKSRLQEIEEDLKDLKVKCADMDALLDFLR.

In Arabidopsis thaliana (Mouse-ear cress), this protein is MATH domain and coiled-coil domain-containing protein At3g27040.